Here is a 351-residue protein sequence, read N- to C-terminus: Type II restriction enzyme NmeDI (351 aa).

The catalysed reaction is Endonucleolytic cleavage of DNA to give specific double-stranded fragments with terminal 5'-phosphates.. Functionally, a P subtype restriction enzyme that recognizes the double-stranded sequence 5'-N(12)RCCGGYN(12)-3' and cleaves on both sides of the recognition sequence. The polypeptide is Type II restriction enzyme NmeDI (nmeDIRP) (Neisseria meningitidis serogroup C).